Here is a 339-residue protein sequence, read N- to C-terminus: UPF0324 membrane protein CPE0129 (339 aa).

The next 8 helical transmembrane spans lie at 12–30 (ILPG…EFLG), 35–54 (TIGA…NTLF), 90–112 (LGFN…TYFI), 122–144 (YSLL…VSPV), 156–178 (ITIV…SILY), 210–232 (VVEL…VLVF), 259–281 (WFII…GILG), and 316–338 (MLYG…NIFI).

It belongs to the UPF0324 family.

Its subcellular location is the cell membrane. This Clostridium perfringens (strain 13 / Type A) protein is UPF0324 membrane protein CPE0129.